A 923-amino-acid polypeptide reads, in one-letter code: Protocadherin gamma-B5 (923 aa).

Residues 1-30 form the signal peptide; that stretch reads MGSGAGELGRAERLPVLFLFLLSLFCPALC. Cadherin domains lie at 31 to 133, 134 to 242, 243 to 343, 344 to 448, 449 to 558, and 566 to 671; these read EQIR…TPKF, TQNS…PPVF, NRDV…SPEV, TFHS…APVF, HQAS…APRV, and DGSA…LPDI. At 31–687 the chain is on the extracellular side; sequence EQIRYRIPEE…SDPQAELQFY (657 aa). Asparagine 415 and asparagine 541 each carry an N-linked (GlcNAc...) asparagine glycan. A helical membrane pass occupies residues 688–708; the sequence is LVVALALISVLFLLAVILAVA. The Cytoplasmic portion of the chain corresponds to 709–923; sequence LRLRRSSSPA…KKKSGKKEKK (215 aa). Disordered stretches follow at residues 794–832 and 893–923; these read TSHP…WPNN and ATLT…KEKK. Residues 807 to 832 are compositionally biased toward polar residues; sequence WRFSQAQRPGTSGSQNGDDTGTWPNN. The segment covering 913-923 has biased composition (basic residues); that stretch reads NKKKSGKKEKK.

It localises to the cell membrane. Its function is as follows. Potential calcium-dependent cell-adhesion protein. May be involved in the establishment and maintenance of specific neuronal connections in the brain. The polypeptide is Protocadherin gamma-B5 (PCDHGB5) (Homo sapiens (Human)).